The primary structure comprises 171 residues: Large ribosomal subunit protein uL10 (171 aa).

It belongs to the universal ribosomal protein uL10 family. As to quaternary structure, part of the ribosomal stalk of the 50S ribosomal subunit. The N-terminus interacts with L11 and the large rRNA to form the base of the stalk. The C-terminus forms an elongated spine to which L12 dimers bind in a sequential fashion forming a multimeric L10(L12)X complex.

Functionally, forms part of the ribosomal stalk, playing a central role in the interaction of the ribosome with GTP-bound translation factors. This is Large ribosomal subunit protein uL10 from Rhizorhabdus wittichii (strain DSM 6014 / CCUG 31198 / JCM 15750 / NBRC 105917 / EY 4224 / RW1) (Sphingomonas wittichii).